The chain runs to 264 residues: [LysW]-aminoadipate/[LysW]-glutamate kinase (264 aa).

Substrate-binding positions include 35–36 (GG), R62, and N167.

It belongs to the acetylglutamate kinase family. LysZ subfamily.

The protein localises to the cytoplasm. It catalyses the reaction [amino-group carrier protein]-C-terminal-N-(1,4-dicarboxybutan-1-yl)-L-glutamine + ATP = [amino-group carrier protein]-C-terminal-N-(1-carboxy-5-phosphooxy-5-oxopentan-1-yl)-L-glutamine + ADP. The catalysed reaction is [amino-group carrier protein]-C-terminal-gamma-(L-glutamyl)-L-glutamate + ATP = [amino-group carrier protein]-C-terminal-gamma-(5-phospho-L-glutamyl)-L-glutamate + ADP. It functions in the pathway amino-acid biosynthesis; L-lysine biosynthesis via AAA pathway; L-lysine from L-alpha-aminoadipate (Thermus route): step 2/5. It participates in amino-acid biosynthesis; L-arginine biosynthesis. In terms of biological role, involved in both the arginine and lysine biosynthetic pathways. Phosphorylates the LysW-bound precursors glutamate (for arginine biosynthesis), respectively alpha-aminoadipate (for lysine biosynthesis). This chain is [LysW]-aminoadipate/[LysW]-glutamate kinase, found in Saccharolobus islandicus (strain Y.N.15.51 / Yellowstone #2) (Sulfolobus islandicus).